The chain runs to 527 residues: GMP synthase [glutamine-hydrolyzing] (527 aa).

The Glutamine amidotransferase type-1 domain maps to 4 to 202 (KILILDFGSQ…VLKICGAKPD (199 aa)). Cysteine 81 acts as the Nucleophile in catalysis. Active-site residues include histidine 176 and glutamate 178. In terms of domain architecture, GMPS ATP-PPase spans 203-395 (WEMGNYIDEA…LGLPPSMVYR (193 aa)). Residue 230–236 (SGGVDSS) participates in ATP binding.

As to quaternary structure, homodimer.

The enzyme catalyses XMP + L-glutamine + ATP + H2O = GMP + L-glutamate + AMP + diphosphate + 2 H(+). Its pathway is purine metabolism; GMP biosynthesis; GMP from XMP (L-Gln route): step 1/1. Functionally, catalyzes the synthesis of GMP from XMP. The chain is GMP synthase [glutamine-hydrolyzing] from Paraburkholderia phymatum (strain DSM 17167 / CIP 108236 / LMG 21445 / STM815) (Burkholderia phymatum).